The sequence spans 296 residues: tRNA dimethylallyltransferase (296 aa).

Gly-11–Thr-18 lines the ATP pocket. Thr-13–Thr-18 is a substrate binding site. The interval Asp-36 to Gln-39 is interaction with substrate tRNA.

It belongs to the IPP transferase family. As to quaternary structure, monomer. Mg(2+) is required as a cofactor.

It carries out the reaction adenosine(37) in tRNA + dimethylallyl diphosphate = N(6)-dimethylallyladenosine(37) in tRNA + diphosphate. Its function is as follows. Catalyzes the transfer of a dimethylallyl group onto the adenine at position 37 in tRNAs that read codons beginning with uridine, leading to the formation of N6-(dimethylallyl)adenosine (i(6)A). In Streptococcus equi subsp. zooepidemicus (strain H70), this protein is tRNA dimethylallyltransferase.